A 156-amino-acid chain; its full sequence is MRNTEKQDNLVRAFKSLLKEERFGSQGEIVDALKHEGFESINQSKVSRMLTKFGAVRTRNAKMEMVYCLPAELGVPTVSSSLRELVLDIDHNNALVVIHTGPGAAQLIARLLDSLGKSEGILGVVAGDDTIFITPTLSVTTKQLFDSVCELFEYAG.

It belongs to the ArgR family.

It localises to the cytoplasm. The protein operates within amino-acid biosynthesis; L-arginine biosynthesis [regulation]. Its function is as follows. Regulates arginine biosynthesis genes. This Vibrio atlanticus (strain LGP32) (Vibrio splendidus (strain Mel32)) protein is Arginine repressor.